The chain runs to 197 residues: ATP-dependent Clp protease proteolytic subunit (197 aa).

Catalysis depends on Ser101, which acts as the Nucleophile. The active site involves His126.

It belongs to the peptidase S14 family. Component of the chloroplastic Clp protease core complex.

It localises to the plastid. The protein localises to the chloroplast stroma. The enzyme catalyses Hydrolysis of proteins to small peptides in the presence of ATP and magnesium. alpha-casein is the usual test substrate. In the absence of ATP, only oligopeptides shorter than five residues are hydrolyzed (such as succinyl-Leu-Tyr-|-NHMec, and Leu-Tyr-Leu-|-Tyr-Trp, in which cleavage of the -Tyr-|-Leu- and -Tyr-|-Trp bonds also occurs).. Its function is as follows. Cleaves peptides in various proteins in a process that requires ATP hydrolysis. Has a chymotrypsin-like activity. Plays a major role in the degradation of misfolded proteins. The chain is ATP-dependent Clp protease proteolytic subunit from Daucus carota (Wild carrot).